The primary structure comprises 137 residues: MAGSQDIFDAIVMADERFHGEGYREGYEEGSSLGVMEGRQHGTLHGAKIGSEIGCYQGFAFAWKCLLHSCTTEKDSRKMKVLESLIGMIQKFPYDDPTYDKLHEDLDKIRGKFKQFCSLLNVQPDFKISAEGSGLSF.

Residue Ala2 is modified to N-acetylalanine. Ser4 bears the Phosphoserine mark. The tract at residues 22 to 58 is deca-GX3 motif; required for interaction with YAE1 and the CIA complex; the sequence is GYREGYEEGSSLGVMEGRQHGTLHGAKIGSEIGCYQG.

This sequence belongs to the LTO1 family. In terms of assembly, forms a complex with YAE1. Interacts with PYCR1 and PYCR2. Widely expressed. Highly expressed in placenta, kidney and skeletal muscle.

The protein resides in the nucleus. Its function is as follows. The complex LTO1:YAE1 functions as a target specific adapter that probably recruits apo-ABCE1 to the cytosolic iron-sulfur protein assembly (CIA) complex machinery. May be required for biogenesis of the large ribosomal subunit and initiation of translation. May play a role in the regulation of proline metabolism and ROS production. In Homo sapiens (Human), this protein is Protein LTO1 homolog.